Here is a 385-residue protein sequence, read N- to C-terminus: WD repeat-containing protein 74 (385 aa).

WD repeat units lie at residues 40-80 (RREE…FQGQ), 83-122 (CPGG…ASSD), 128-168 (RVGP…EPLF), 179-220 (DLRV…RRPV), 224-266 (TYGE…GCLK), and 267-306 (GLAG…GLEH). Position 214 is a phosphoserine (S214). N6-methyllysine is present on K311. The segment at 320–385 (SGRDNWEDEP…KKKRPGSTSS (66 aa)) is required for nucleolar and nuclear location. A disordered region spans residues 323–385 (DNWEDEPQEP…KKKRPGSTSS (63 aa)). Basic residues predominate over residues 372–385 (ARRRKKKRPGSTSS).

Isoform 1 interacts (through WDR repeats) with NVL; the interaction is independent of RNA or pre-60S ribosome particles. Isoform 2 does not interact with NVL. Interacts with MTREX; the interaction dissociation in a late stage of rRNA synthesis is required for appropriate maturation of pre-60S particles and depends on the ATPase activity of NVL.

Its subcellular location is the nucleus. It localises to the nucleolus. Regulatory protein of the MTREX-exosome complex involved in the synthesis of the 60S ribosomal subunit. Participates in an early cleavage of the pre-rRNA processing pathway in cooperation with NVL. The chain is WD repeat-containing protein 74 (WDR74) from Bos taurus (Bovine).